Here is a 99-residue protein sequence, read N- to C-terminus: uncharacterized protein (99 aa).

Residues 1-17 form the signal peptide; the sequence is MMMNAFFPAMALIVLVG. The N-palmitoyl cysteine moiety is linked to residue Cys18. Cys18 is lipidated: S-diacylglycerol cysteine.

The protein localises to the cell membrane. This is an uncharacterized protein from Escherichia coli O6:H1 (strain CFT073 / ATCC 700928 / UPEC).